A 289-amino-acid chain; its full sequence is 4-diphosphocytidyl-2-C-methyl-D-erythritol kinase (289 aa).

Lysine 11 is an active-site residue. ATP is bound at residue 96-106 (PVAAGIGGGSS). Residue aspartate 138 is part of the active site.

It belongs to the GHMP kinase family. IspE subfamily.

It carries out the reaction 4-CDP-2-C-methyl-D-erythritol + ATP = 4-CDP-2-C-methyl-D-erythritol 2-phosphate + ADP + H(+). Its pathway is isoprenoid biosynthesis; isopentenyl diphosphate biosynthesis via DXP pathway; isopentenyl diphosphate from 1-deoxy-D-xylulose 5-phosphate: step 3/6. Its function is as follows. Catalyzes the phosphorylation of the position 2 hydroxy group of 4-diphosphocytidyl-2C-methyl-D-erythritol. In Azorhizobium caulinodans (strain ATCC 43989 / DSM 5975 / JCM 20966 / LMG 6465 / NBRC 14845 / NCIMB 13405 / ORS 571), this protein is 4-diphosphocytidyl-2-C-methyl-D-erythritol kinase.